The chain runs to 395 residues: Putative nickel insertion protein (395 aa).

It belongs to the LarC family.

This is Putative nickel insertion protein from Methanopyrus kandleri (strain AV19 / DSM 6324 / JCM 9639 / NBRC 100938).